Here is a 311-residue protein sequence, read N- to C-terminus: Homoserine O-acetyltransferase (311 aa).

Catalysis depends on cysteine 142, which acts as the Acyl-thioester intermediate. 2 residues coordinate substrate: lysine 163 and serine 192. Residue histidine 235 is the Proton acceptor of the active site. Glutamate 237 is an active-site residue. Arginine 249 is a substrate binding site.

This sequence belongs to the MetA family.

Its subcellular location is the cytoplasm. The enzyme catalyses L-homoserine + acetyl-CoA = O-acetyl-L-homoserine + CoA. Its pathway is amino-acid biosynthesis; L-methionine biosynthesis via de novo pathway; O-acetyl-L-homoserine from L-homoserine: step 1/1. Functionally, transfers an acetyl group from acetyl-CoA to L-homoserine, forming acetyl-L-homoserine. This Lysinibacillus sphaericus (strain C3-41) protein is Homoserine O-acetyltransferase.